The chain runs to 331 residues: Glycerophosphodiester phosphodiesterase 1 (331 aa).

At 1 to 2 (MW) the chain is on the cytoplasmic side. The helical transmembrane segment at 3–23 (LWEEQGGLMGPFSFLLLVLLL) threads the bilayer. The Lumenal portion of the chain corresponds to 24-254 (LTRSPFNACL…WKQSMFVALD (231 aa)). The 267-residue stretch at 65–331 (VSAIAHRGGS…SMLEDCTPEF (267 aa)) folds into the GP-PDE domain. Mg(2+) is bound by residues Glu-97 and Asp-99. Asn-168 is a glycosylation site (N-linked (GlcNAc...) asparagine). Position 174 (Asp-174) interacts with Mg(2+). N-linked (GlcNAc...) asparagine glycosylation occurs at Asn-198. The chain crosses the membrane as a helical span at residues 255-275 (ILLDWSMHNILWYLCGVSAFL). Over 276–331 (AQKDFISPDYVKKWSAKGIQVVAWTVNTFDEKSYYESHLGSSYITDSMLEDCTPEF) the chain is Cytoplasmic.

It belongs to the glycerophosphoryl diester phosphodiesterase family. Interacts with PRAF2. Interacts with RGS16. The cofactor is Mg(2+). N-glycosylated.

It localises to the cell membrane. The protein resides in the cytoplasmic vesicle membrane. It catalyses the reaction sn-glycero-3-phospho-1D-myo-inositol + H2O = myo-inositol + sn-glycerol 3-phosphate + H(+). It carries out the reaction 1-O-(1Z-octadecenyl)-sn-glycero-3-phospho-(N-5Z,8Z,11Z,14Z-eicosatetraenoyl)-ethanolamine + H2O = 1-O-(1Z-octadecenyl)-sn-glycero-3-phosphate + N-(5Z,8Z,11Z,14Z-eicosatetraenoyl)-ethanolamine + H(+). The enzyme catalyses 1-O-(1Z-octadecenyl)-sn-glycero-3-phospho-(N-9Z-octadecenoyl)-ethanolamine + H2O = 1-O-(1Z-octadecenyl)-sn-glycero-3-phosphate + N-(9Z-octadecenoyl) ethanolamine + H(+). The catalysed reaction is 1-O-(1Z-octadecenyl)-sn-glycero-3-phospho-N-hexadecanoyl-ethanolamine + H2O = 1-O-(1Z-octadecenyl)-sn-glycero-3-phosphate + N-hexadecanoylethanolamine + H(+). It catalyses the reaction N-(4Z,7Z,10Z,13Z,16Z,19Z)-docosahexaenoyl-sn-glycero-3-phosphoethanolamine + H2O = N-(4Z,7Z,10Z,13Z,16Z,19Z)-docosahexaenoyl ethanolamine + sn-glycerol 3-phosphate + H(+). It carries out the reaction N-eicosanoyl-sn-glycero-3-phosphoethanolamine + H2O = N-eicosanoyl ethanolamine + sn-glycerol 3-phosphate + H(+). The enzyme catalyses N-hexadecanoyl-sn-glycero-3-phosphoethanolamine + H2O = N-hexadecanoylethanolamine + sn-glycerol 3-phosphate + H(+). The catalysed reaction is N-(9Z-octadecenoyl)-sn-glycero-3-phosphoethanolamine + H2O = N-(9Z-octadecenoyl) ethanolamine + sn-glycerol 3-phosphate + H(+). It catalyses the reaction N-(5Z,8Z,11Z,14Z-eicosatetraenoyl)-sn-glycero-3-phosphoethanolamine + H2O = N-(5Z,8Z,11Z,14Z-eicosatetraenoyl)-ethanolamine + sn-glycerol 3-phosphate + H(+). Its activity is regulated as follows. Inhibited by EDTA, calcium chloride, and zinc chloride. Enhanced by magnesium chloride. Glycerophosphodiester phosphodiesterase activity can be modulated by G-protein signaling pathways. Its function is as follows. Hydrolyzes the phosphodiester bond of glycerophosphodiesters such as glycerophosphoinositol (GroPIns) and glycerophosphoethanolamine (GroPEth), to yield a glycerol phosphate and an alcohol. Hydrolyzes glycerophospho-N-acylethanolamines to N-acylethanolamines in the brain and participates in bioactive N-acylethanolamine biosynthesis such as anandamide (an endocannabinoid), N-palmitoylethanolamine (an anti-inflammatory), and N-oleoylethanolamine (an anorexic). In addition, has a lysophospholipase D activity by hydrolyzing N-acyl-lysoplasmenylethanolamine (N-acyl-lysoPlsEt) to N-acylethanolamine. However lysophospholipase D activity is lower than glycerophosphodiester phosphodiesterase activity. Has little or no activity towards glycerophosphocholine. The chain is Glycerophosphodiester phosphodiesterase 1 from Bos taurus (Bovine).